A 340-amino-acid polypeptide reads, in one-letter code: UDP-N-acetylglucosamine--N-acetylmuramyl-(pentapeptide) pyrophosphoryl-undecaprenol N-acetylglucosamine transferase (340 aa).

Residues 10-12, asparagine 124, serine 179, and glutamine 277 each bind UDP-N-acetyl-alpha-D-glucosamine; that span reads TGG.

It belongs to the glycosyltransferase 28 family. MurG subfamily.

The protein localises to the cell inner membrane. The catalysed reaction is di-trans,octa-cis-undecaprenyl diphospho-N-acetyl-alpha-D-muramoyl-L-alanyl-D-glutamyl-meso-2,6-diaminopimeloyl-D-alanyl-D-alanine + UDP-N-acetyl-alpha-D-glucosamine = di-trans,octa-cis-undecaprenyl diphospho-[N-acetyl-alpha-D-glucosaminyl-(1-&gt;4)]-N-acetyl-alpha-D-muramoyl-L-alanyl-D-glutamyl-meso-2,6-diaminopimeloyl-D-alanyl-D-alanine + UDP + H(+). Its pathway is cell wall biogenesis; peptidoglycan biosynthesis. In terms of biological role, cell wall formation. Catalyzes the transfer of a GlcNAc subunit on undecaprenyl-pyrophosphoryl-MurNAc-pentapeptide (lipid intermediate I) to form undecaprenyl-pyrophosphoryl-MurNAc-(pentapeptide)GlcNAc (lipid intermediate II). This is UDP-N-acetylglucosamine--N-acetylmuramyl-(pentapeptide) pyrophosphoryl-undecaprenol N-acetylglucosamine transferase from Sulfurimonas denitrificans (strain ATCC 33889 / DSM 1251) (Thiomicrospira denitrificans (strain ATCC 33889 / DSM 1251)).